The primary structure comprises 845 residues: MTPRSRLATLGTVILLVCFCAGAAHSRGDTFQTSSSPTPPGSSSKAPTKPGEEASGPKSVDFYQFRVCSASITGELFRFNLEQTCPDTKDKYHQEGILLVYKKNIVPHIFKVRRYRKIATSVTVYRGLTESAITNKYELPRPVPLYEISHMDSTYQCFSSMKVNVNGVENTFTDRDDVNTTVFLQPVEGLTDNIQRYFSQPVIYAEPGWFPGIYRVRTTVNCEIVDMIARSAEPYNYFVTSLGDTVEVSPFCYNESSCSTTPSNKNGLSVQVVLNHTVVTYSDRGTSPTPQNRIFVETGAYTLSWASESKTTAVCPLALWKTFPRSIQTTHEDSFHFVANEITATFTAPLTPVANFTDTYSCLTSDINTTLNASKAKLASTHVPNGTVQYFHTTGGLYLVWQPMSAINLTHAQGDSGNPTSSPPPSASPMTTSASRRKRRSASTAAAGGGGSTDNLSYTQLQFAYDKLRDGINQVLEELSRAWCREQVRDNLMWYELSKINPTSVMTAIYGRPVSAKFVGDAISVTECINVDQSSVNIHKSLRTNSKDVCYARPLVTFKFLNSSNLFTGQLGARNEIILTNNQVETCKDTCEHYFITRNETLVYKDYAYLRTINTTDISTLNTFIALNLSFIQNIDFKAIELYSSAEKRLASSVFDLETMFREYNYYTHRLAGLREDLDNTIDMNKERFVRDLSEIVADLGGIGKTVVNVASSVVTLCGSLVTGFINFIKHPLGGMLMIIIVIAIILIIFMLSRRTNTIAQAPVKMIYPDVDRRAPPSGGAPTREEIKNILLGMHQLQQEERQKADDLKKSTPSVFQRTANGLRQRLRGYKPLTQSLDISPETGE.

Positions M1–S26 are cleaved as a signal peptide. Residues R27–P732 lie on the Virion surface side of the membrane. A disordered region spans residues D29–P57. Residues T33 to K49 are compositionally biased toward low complexity. Disulfide bonds link C68-C528, C85-C484, C157-C222, C315-C362, and C550-C587. The segment at V124–E130 is involved in fusion and/or binding to host membrane. Residue N179 is glycosylated (N-linked (GlcNAc...) asparagine; by host). The segment at G208 to V216 is involved in fusion and/or binding to host membrane. 7 N-linked (GlcNAc...) asparagine; by host glycosylation sites follow: N254, N275, N355, N368, N372, N385, and N408. Positions H411–G451 are disordered. Residues N455, N562, N599, N614, and N628 are each glycosylated (N-linked (GlcNAc...) asparagine; by host). The tract at residues L678 to K730 is hydrophobic membrane proximal region. Residues L733–S753 form a helical membrane-spanning segment. The Intravirion segment spans residues R754–E845. The segment at R802–E845 is disordered. The segment covering S811–G822 has biased composition (polar residues). The short motif at Y830–L833 is the Internalization motif element.

This sequence belongs to the herpesviridae glycoprotein B family. In terms of assembly, homotrimer; disulfide-linked. Binds to heparan sulfate proteoglycans. Interacts with gH/gL heterodimer. Interacts with host ITGAV-ITGB3; this interaction mediates viral entry. A proteolytic cleavage by host furin generates two subunits that remain linked by disulfide bonds.

It localises to the virion membrane. The protein localises to the host cell membrane. It is found in the host endosome membrane. Its subcellular location is the host Golgi apparatus membrane. In terms of biological role, envelope glycoprotein that forms spikes at the surface of the virion envelope. Participates in viral entry through an RGD motif that binds ITGAV-ITGB3. Membrane fusion is mediated by the fusion machinery composed at least of gB and the heterodimer gH/gL. May be involved in the fusion between the virion envelope and the outer nuclear membrane during virion egress. The sequence is that of Envelope glycoprotein B from Homo sapiens (Human).